We begin with the raw amino-acid sequence, 468 residues long: MDFKKDRINMVDGQTAKKTVFATGIGNAMEWFDFGVYAYTTAYIGANFFSPVQNPEIQQIFTFAALAIAFLLRPIGGIVFGIIGDKYGRKVVLTTTIILMALSTLTIGVLPNYDMIGLWAPALLLLARILQGFSTGGEYAGAMTYIAEISPDKKRNSLGSGLEIGTLSGYIAASIMIALLSFFLSDAQMEAWGWRIPFILGLFLGLFGLYLRRKLEESPIYENDVETPARDNIGFFTIIRYYFKDILVCFVAVVFFNVTNYTVTAYLPTYLGQIVKIDETTTSVLITCVMAVMIPLALFFGKLADKIGEKKVFLIGTGGLTLLSIVAFSLLNTKSLPFIILGVFILGFFLSTYEATMPGSLPTMFFTHIRYRTLAVTFNISVSLFGGTTPLVNSWLVESTGNIYAPAYYLTAISIIGFIVIAVLHVSTAGKSLKGSYPNVDNKKDLEFYESNPKKALWWIKVKKNKNA.

12 helical membrane-spanning segments follow: residues 20–42 (VFATGIGNAMEWFDFGVYAYTTA), 63–83 (FAALAIAFLLRPIGGIVFGII), 91–111 (VVLTTTIILMALSTLTIGVLP), 115–135 (MIGLWAPALLLLARILQGFST), 164–184 (IGTLSGYIAASIMIALLSFFL), 191–211 (AWGWRIPFILGLFLGLFGLYL), 246–266 (ILVCFVAVVFFNVTNYTVTAY), 284–304 (VLITCVMAVMIPLALFFGKLA), 312–332 (VFLIGTGGLTLLSIVAFSLLN), 336–356 (LPFIILGVFILGFFLSTYEAT), 376–396 (VTFNISVSLFGGTTPLVNSWL), and 403–423 (IYAPAYYLTAISIIGFIVIAV).

The protein belongs to the major facilitator superfamily. Metabolite:H+ Symporter (MHS) family (TC 2.A.1.6) family.

The protein resides in the cell membrane. In terms of biological role, may be a proton symporter involved in the uptake of osmolytes such as proline and glycine betaine. The sequence is that of Putative proline/betaine transporter (proP) from Staphylococcus haemolyticus (strain JCSC1435).